The sequence spans 432 residues: Glial fibrillary acidic protein (432 aa).

The segment at 1–72 (MERRRITSAA…KETRASERAE (72 aa)) is head. Position 7 is a phosphothreonine; by AURKB and ROCK1 (Thr7). At Arg12 the chain carries Omega-N-methylarginine. Ser13 bears the Phosphoserine; by AURKB and ROCK1 mark. Citrulline is present on residues Arg30 and Arg36. Ser38 carries the phosphoserine; by AURKB and ROCK1 modification. One can recognise an IF rod domain in the interval 69–377 (ERAEMMELND…KLLEGEENRI (309 aa)). The interval 73–104 (MMELNDRFASYIEKVRFLEQQNKALAAELNQL) is coil 1A. Ser82 carries the phosphoserine modification. Positions 105–115 (RAKEPTKLADV) are linker 1. Residues Thr110 and Thr150 each carry the phosphothreonine modification. Residues 116-214 (YQAELRELRL…EEEVRELQEQ (99 aa)) are coil 1B. Positions 215 to 230 (LARQQVHVELDMAKPD) are linker 12. Residues 231–252 (LTAALKEIRTQYEAMASSNMHE) form a coil 2A region. The interval 253 to 256 (AEEW) is linker 2. Positions 257-377 (YRSKFADLTD…KLLEGEENRI (121 aa)) are coil 2B. Arg270 is subject to Citrulline. Residue Ser323 is modified to Phosphoserine. Residues 378–432 (TIPVQTFSNLQIRETSLDTKSVSEGHLKRNIVVKTVEMRDGEVIKESKQEHKDVM) form a tail region. Phosphothreonine is present on Thr383. At Ser385 the chain carries Phosphoserine. Citrulline occurs at positions 406 and 416.

This sequence belongs to the intermediate filament family. Interacts with SYNM. In terms of processing, phosphorylated by PKN1.

It is found in the cytoplasm. Functionally, GFAP, a class-III intermediate filament, is a cell-specific marker that, during the development of the central nervous system, distinguishes astrocytes from other glial cells. This is Glial fibrillary acidic protein (GFAP) from Pongo abelii (Sumatran orangutan).